The chain runs to 200 residues: Cysteine dioxygenase type 1 (200 aa).

Residues H86, H88, and H140 each contribute to the Fe cation site. The 3'-(S-cysteinyl)-tyrosine (Cys-Tyr) cross-link spans 93 to 157 (CFLKMLQGNL…TEPAVSLHLY (65 aa)).

It belongs to the cysteine dioxygenase family. Monomer. Requires Fe cation as cofactor. The cofactor is Ni(2+). Zn(2+) serves as cofactor. Post-translationally, the thioether cross-link between Cys-93 and Tyr-157 plays a structural role through stabilizing the Fe(2+) ion, and prevents the production of highly damaging free hydroxyl radicals by holding the oxygen radical via hydroxyl hydrogen.

The catalysed reaction is L-cysteine + O2 = 3-sulfino-L-alanine + H(+). Its pathway is organosulfur biosynthesis; taurine biosynthesis; hypotaurine from L-cysteine: step 1/2. Functionally, catalyzes the oxidation of cysteine to cysteine sulfinic acid with addition of molecular dioxygen. In Bos taurus (Bovine), this protein is Cysteine dioxygenase type 1 (CDO1).